The primary structure comprises 475 residues: Putative poly(A) polymerase catalytic subunit (475 aa).

This sequence belongs to the poxviridae poly(A) polymerase catalytic subunit family. Highly divergent.

Its subcellular location is the virion. It catalyses the reaction RNA(n) + ATP = RNA(n)-3'-adenine ribonucleotide + diphosphate. Its function is as follows. Polymerase that creates the 3'-poly(A) tail of mRNA's. This is Putative poly(A) polymerase catalytic subunit from Ornithodoros (relapsing fever ticks).